A 438-amino-acid polypeptide reads, in one-letter code: Thymidine phosphorylase (438 aa).

Belongs to the thymidine/pyrimidine-nucleoside phosphorylase family. Homodimer.

The catalysed reaction is thymidine + phosphate = 2-deoxy-alpha-D-ribose 1-phosphate + thymine. It functions in the pathway pyrimidine metabolism; dTMP biosynthesis via salvage pathway; dTMP from thymine: step 1/2. Functionally, the enzymes which catalyze the reversible phosphorolysis of pyrimidine nucleosides are involved in the degradation of these compounds and in their utilization as carbon and energy sources, or in the rescue of pyrimidine bases for nucleotide synthesis. The sequence is that of Thymidine phosphorylase from Sinorhizobium medicae (strain WSM419) (Ensifer medicae).